The following is a 583-amino-acid chain: SHC-transforming protein 1 (583 aa).

An N-acetylmethionine modification is found at methionine 1. Disordered regions lie at residues 1–92 (MDLL…DDGE) and 113–137 (KLSG…WTRH). Low complexity predominate over residues 16-44 (ESLSSLEEGASGSTPPEELPSPSASSLGP). At serine 36 the chain carries Phosphoserine. Position 139 is a phosphoserine (serine 139). N6-acetyllysine is present on lysine 154. One can recognise a PID domain in the interval 156 to 339 (MGPGVSYLVR…AGFDGSAWDE (184 aa)). The segment at 340–487 (EEEEPPDHQY…SMAEQLRGEP (148 aa)) is CH1. Residues tyrosine 349 and tyrosine 350 each carry the phosphotyrosine modification. A disordered region spans residues 372–416 (AAPGAARSTAPSAQTPSHLGATLPVGQPVGGDPEVRKQMPPPPPC). Tyrosine 427 is modified (phosphotyrosine). Serine 453 is subject to Phosphoserine. The SH2 domain maps to 488-579 (WFHGKLSRRE…GSELCLQQPV (92 aa)).

As to quaternary structure, interacts with CPNE3; this interaction may mediate the binding of CPNE3 with ERBB2. Interacts with the Trk receptors NTRK1, NTRK2 and NTRK3; in a phosphotyrosine-dependent manner. Interacts with the NPXY motif of tyrosine-phosphorylated IGF1R and INSR in vitro via the PID domain. Once activated, binds to GRB2. Interacts with tyrosine-phosphorylated CD3T and DDR2. Interacts with the N-terminal region of APS. Interacts with phosphorylated LRP1 and IRS4. Interacts with INPP5D/SHIP1 and INPPL1/SHIP2. Interacts with ALK, GAB2, GRB7 and KIT. Interacts with PTPN6/SHP (tyrosine phosphorylated). Identified in a complex containing FGFR4, NCAM1, CDH2, PLCG1, FRS2, SRC, SHC1, GAP43 and CTTN. Interacts with FLT4 (tyrosine-phosphorylated). Interacts with EPHB1 and GRB2; activates the MAPK/ERK cascade to regulate cell migration. Interacts with PDGFRB (tyrosine-phosphorylated). Interacts with ERBB4. Interacts with TEK/TIE2 (tyrosine-phosphorylated). Interacts with PTK2/FAK1. Interacts with CEACAM1; this interaction is CEACAM1-phosphorylation-dependent and mediates interaction with EGFR or INSR resulting in decrease coupling of SHC1 to the MAPK3/ERK1-MAPK1/ERK2 pathway. Interacts (via PID domain) with PEAK1 (when phosphorylated). Found in a complex with PPP1CA, PPP1CC, SHC1 and PEAK1. Phosphorylated by activated epidermal growth factor receptor. Phosphorylated in response to KIT signaling. Tyrosine phosphorylated in response to FLT3 and FLT4 signaling and by ligand-activated ALK. Tyrosine phosphorylated by ligand-activated PDGFRB. Tyrosine phosphorylated by TEK/TIE2. May be tyrosine phosphorylated by activated PTK2/FAK1. Tyrosine phosphorylated by activated PTK2B/PYK2. Dephosphorylation by PTPN2 may regulate interaction with GRB2.

It localises to the cytoplasm. Its subcellular location is the cell junction. It is found in the focal adhesion. Its function is as follows. Signaling adapter that couples activated growth factor receptors to signaling pathways. Participates in a signaling cascade initiated by activated KIT and KITLG/SCF. Participates in signaling downstream of the angiopoietin receptor TEK/TIE2, and plays a role in the regulation of endothelial cell migration and sprouting angiogenesis. This is SHC-transforming protein 1 (SHC1) from Pongo abelii (Sumatran orangutan).